A 740-amino-acid chain; its full sequence is Platelet endothelial cell adhesion molecule (740 aa).

Positions 1–27 (MRLRWTQGGNMWLGVLLTLQLCSSLEG) are cleaved as a signal peptide. At 28 to 602 (QENSFTINSI…VRVYLAPWKK (575 aa)) the chain is on the extracellular side. 3 consecutive Ig-like C2-type domains span residues 35–126 (NSIH…YKVV), 145–223 (GGVV…DSVR), and 236–315 (PKFH…SKVS). Asn-52 and Asn-84 each carry an N-linked (GlcNAc...) asparagine glycan. 3 disulfide bridges follow: Cys-57-Cys-109, Cys-152-Cys-206, and Cys-256-Cys-304. N-linked (GlcNAc...) asparagine glycans are attached at residues Asn-284, Asn-301, Asn-320, Asn-357, Asn-372, Asn-436, Asn-456, and Asn-552. Ig-like C2-type domains lie at 328–404 (PKLK…VQIA), 425–494 (GQTI…KVLR), and 500–592 (PVEE…NILA). 3 disulfides stabilise this stretch: Cys-347–Cys-387, Cys-432–Cys-477, and Cys-524–Cys-573. The chain crosses the membrane as a helical span at residues 603-621 (GLIAVVVIAVIIAVLLLGA). The Cytoplasmic segment spans residues 622-740 (RFYFLKKSKA…SRTEGSLDGT (119 aa)). 2 consecutive short sequence motifs (ITIM motif) follow at residues 690–695 (VEYTEV) and 713–718 (TVYSEI). Phosphotyrosine; by FER is present on residues Tyr-692 and Tyr-715. Residues 697-740 (VTSPEPHRGLGTKGTETVYSEIRKADPDLVENRYSRTEGSLDGT) form a disordered region. The membrane-bound segment which detaches upon phosphorylation stretch occupies residues 711 to 731 (TETVYSEIRKADPDLVENRYS). Over residues 717-732 (EIRKADPDLVENRYSR) the composition is skewed to basic and acidic residues. Residues 723-740 (PDLVENRYSRTEGSLDGT) form a may play a role in cytoprotective signaling region. 2 positions are modified to phosphoserine: Ser-731 and Ser-736.

Trans-homodimer (via Ig-like C2-type 1 and Ig-like C2-type 2 domains); trans-homodimerization is required for cell-cell interaction. Forms a complex with BDKRB2 and GNAQ. Interacts with BDKRB2 and GNAQ. Interacts with PTPN11; Tyr-715 is critical for PTPN11 recruitment. Interacts with FER. Interacts with CD177; the interaction is Ca(2+)-dependent; the interaction is direct. Post-translationally, phosphorylated on Ser and Tyr residues by src kinases after cellular activation. Upon activation, phosphorylated on Ser-731 which probably initiates the dissociation of the membrane-interaction segment (residues 711-731) from the cell membrane allowing the sequential phosphorylation of Tyr-715 and Tyr-692. Constitutively phosphorylated on Ser-736 in resting platelets. Phosphorylated on tyrosine residues by FER and FES in response to FCER1 activation. In endothelial cells Fyn mediates mechanical-force (stretch or pull) induced tyrosine phosphorylation. Palmitoylation by ZDHHC21 is necessary for cell surface expression in endothelial cells and enrichment in membrane rafts.

It is found in the cell membrane. The protein resides in the membrane raft. The protein localises to the cell junction. Cell adhesion molecule which is required for leukocyte transendothelial migration (TEM) under most inflammatory conditions. Tyr-692 plays a critical role in TEM and is required for efficient trafficking of PECAM1 to and from the lateral border recycling compartment (LBRC) and is also essential for the LBRC membrane to be targeted around migrating leukocytes. Trans-homophilic interaction may play a role in endothelial cell-cell adhesion via cell junctions. Heterophilic interaction with CD177 plays a role in transendothelial migration of neutrophils. Homophilic ligation of PECAM1 prevents macrophage-mediated phagocytosis of neighboring viable leukocytes by transmitting a detachment signal. Promotes macrophage-mediated phagocytosis of apoptotic leukocytes by tethering them to the phagocytic cells; PECAM1-mediated detachment signal appears to be disabled in apoptotic leukocytes. Modulates bradykinin receptor BDKRB2 activation. Regulates bradykinin- and hyperosmotic shock-induced ERK1/2 activation in endothelial cells. Induces susceptibility to atherosclerosis. In Sus scrofa (Pig), this protein is Platelet endothelial cell adhesion molecule (PECAM1).